The following is a 155-amino-acid chain: Leader peptidase HopD (155 aa).

It belongs to the peptidase A24 family.

The protein is Leader peptidase HopD (hopD) of Salmonella typhimurium (strain LT2 / SGSC1412 / ATCC 700720).